Here is a 116-residue protein sequence, read N- to C-terminus: Toxin CSTX-10 (116 aa).

Positions 1–20 (MKVLVIFAVLSLVIFSNCSA) are cleaved as a signal peptide. Positions 21 to 47 (ETDEDFFGEESFEADDIIPFIAKEQVR) are excised as a propeptide. 4 cysteine pairs are disulfide-bonded: cysteine 53–cysteine 68, cysteine 60–cysteine 77, cysteine 67–cysteine 94, and cysteine 79–cysteine 92.

In terms of tissue distribution, expressed by the venom gland.

The protein resides in the secreted. It is found in the target cell membrane. In terms of biological role, spider venom toxin that shows calcium channel blocking activity and exhibits cytolytic activity by affecting the outer leaflet curvature and/or pore formation across the membrane. It blocks L-type calcium channels (Cav1/CACNA1) in mammalian neurons at nanomolar concentrations. Furthermore, it produces a slow voltage-independent block of mid/low and high voltage-activated calcium channels in cockroach neurons. Potassium ions, histamine, M-ctenitoxin-Cs1a (AC P83619), CSTX-9 (AC P58604), and CSTX-13 (AC P83919) synergistically increase the insecticidal activity of this toxin. In vivo, it causes paralysis in blow flies and provokes death in drosophila. This chain is Toxin CSTX-10, found in Cupiennius salei (American wandering spider).